The sequence spans 1319 residues: DNA-directed RNA polymerase subunit beta' (1319 aa).

Residues Cys-59, Cys-61, Cys-74, and Cys-77 each coordinate Zn(2+). Mg(2+) contacts are provided by Asp-449, Asp-451, and Asp-453. Zn(2+) contacts are provided by Cys-773, Cys-846, Cys-853, and Cys-856.

Belongs to the RNA polymerase beta' chain family. In terms of assembly, the RNAP catalytic core consists of 2 alpha, 1 beta, 1 beta' and 1 omega subunit. When a sigma factor is associated with the core the holoenzyme is formed, which can initiate transcription. Mg(2+) is required as a cofactor. The cofactor is Zn(2+).

It catalyses the reaction RNA(n) + a ribonucleoside 5'-triphosphate = RNA(n+1) + diphosphate. Functionally, DNA-dependent RNA polymerase catalyzes the transcription of DNA into RNA using the four ribonucleoside triphosphates as substrates. The protein is DNA-directed RNA polymerase subunit beta' of Fusobacterium nucleatum subsp. nucleatum (strain ATCC 25586 / DSM 15643 / BCRC 10681 / CIP 101130 / JCM 8532 / KCTC 2640 / LMG 13131 / VPI 4355).